The sequence spans 662 residues: Replication protein E1 (662 aa).

Basic and acidic residues predominate over residues V28–S38. Residues V28–P60 form a disordered region. Positions D39–F55 are enriched in acidic residues. A Nuclear localization signal motif is present at residues K88–K90. Residues S94, S98, and S111 each carry the phosphoserine; by host modification. Residues L110–L119 carry the Nuclear export signal motif. Positions T160–G197 are disordered. Residues Q199–E365 form a DNA-binding region region. The SF3 helicase domain occupies V464 to L614. Residue G490–S497 coordinates ATP. A Glycyl lysine isopeptide (Lys-Gly) (interchain with G-Cter in SUMO) cross-link involves residue K571. The disordered stretch occupies residues D637–L662.

It belongs to the papillomaviridae E1 protein family. Can form hexamers. Interacts with E2 protein; this interaction increases E1 DNA binding specificity. Interacts with host DNA polymerase subunit POLA2. Interacts with host single stranded DNA-binding protein RPA1. Interacts with host TOP1; this interaction stimulates the enzymatic activity of TOP1. Phosphorylated. Post-translationally, sumoylated.

The protein resides in the host nucleus. It catalyses the reaction Couples ATP hydrolysis with the unwinding of duplex DNA by translocating in the 3'-5' direction.. It carries out the reaction ATP + H2O = ADP + phosphate + H(+). Its function is as follows. ATP-dependent DNA 3'-5' helicase required for initiation of viral DNA replication. It forms a complex with the viral E2 protein. The E1-E2 complex binds to the replication origin which contains binding sites for both proteins. During the initial step, a dimer of E1 interacts with a dimer of protein E2 leading to a complex that binds the viral origin of replication with high specificity. Then, a second dimer of E1 displaces the E2 dimer in an ATP-dependent manner to form the E1 tetramer. Following this, two E1 monomers are added to each half of the site, which results in the formation of two E1 trimers on the viral ori. Subsequently, two hexamers will be created. The double hexamer acts as a bi-directional helicase machinery and unwinds the viral DNA and then recruits the host DNA polymerase to start replication. This is Replication protein E1 from Homo sapiens (Human).